The primary structure comprises 159 residues: Transcriptional repressor NrdR (159 aa).

Residues 1–11 (MQCPTCQNTDS) are compositionally biased toward polar residues. The disordered stretch occupies residues 1–21 (MQCPTCQNTDSRVLESRSADS). The segment at 3–34 (CPTCQNTDSRVLESRSADSGKSVRRRRECLNC) is a zinc-finger region. Residues 49–139 (VSVLKKDGGR…VYRKFNGVKD (91 aa)) form the ATP-cone domain.

This sequence belongs to the NrdR family. The cofactor is Zn(2+).

Its function is as follows. Negatively regulates transcription of bacterial ribonucleotide reductase nrd genes and operons by binding to NrdR-boxes. This is Transcriptional repressor NrdR from Prochlorococcus marinus (strain AS9601).